The primary structure comprises 116 residues: UPF0102 protein Sala_0262 (116 aa).

It belongs to the UPF0102 family.

In Sphingopyxis alaskensis (strain DSM 13593 / LMG 18877 / RB2256) (Sphingomonas alaskensis), this protein is UPF0102 protein Sala_0262.